Here is a 458-residue protein sequence, read N- to C-terminus: MVSLKVCFLLLASSELAFGAAPGARSRRRGTAPANPYDKDTTSYCTWWLDYNEELPCDQVLQANSITLEKFRRWVSGGQSNTPINQWENHKANHKAKNPSITGNCEGMTVGKSYCVEAAFEPTPTASPTGPSGPTGTPGTIETPLPTQPEIAPNCDAFHLVKQGEDCGTISATYGITSAQFLAWNPSAGKDCTGLWANAYACVSIVGHEPPKTTSQAPQPTPTKPSNGIETPLPTQPKIVDNCDKFHLVQSGEGCAAITSKYGISLAQFTQWNPAAGSNCEGLWANAYACVSIIGHEPMPTPTKPSNGIETPLPTQPEIVDNCNKFYLVQSGDTCTTIVSKYGITLSDFTKWNPKAGNTCAGLWANAYSCVSIIGYTPKPSPTPTPTKPPNGIQTPTPIQNGMVTNCNKFHFVENGNTCPVIQAKYKVTLADLVRWNPAIKADCTGLWAKTYLCVGTL.

The N-terminal stretch at 1-19 is a signal peptide; the sequence is MVSLKVCFLLLASSELAFG. The region spanning 157 to 203 is the LysM 1 domain; it reads AFHLVKQGEDCGTISATYGITSAQFLAWNPSAGKDCTGLWANAYACV. The tract at residues 210–232 is disordered; sequence PPKTTSQAPQPTPTKPSNGIETP. Residues 212-229 are compositionally biased toward polar residues; the sequence is KTTSQAPQPTPTKPSNGI. 3 consecutive LysM domains span residues 245 to 291, 325 to 371, and 409 to 455; these read KFHL…YACV, KFYL…YSCV, and KFHF…YLCV.

It localises to the secreted. Functionally, might have a role in sequestration of chitin oligosaccharides (breakdown products of fungal cell walls that are released during invasion and act as triggers of host immunity) to dampen host defense. In Arthroderma benhamiae (strain ATCC MYA-4681 / CBS 112371) (Trichophyton mentagrophytes), this protein is LysM domain-containing protein ARB_05157.